The chain runs to 604 residues: MTDVPVSRLRNFCIIAHIDHGKSTLADRLLQDTGTVAGRDMQEQFLDNMDLERERGITIKLQAARMNYTAADGESYVLNLIDTPGHVDFSYEVSRSLQACEGALLVVDASQGVEAQTLANVYLALENDLEIIPVLNKIDLPGSDPERIKEEIEAIIGLDTSTAIACSAKTGLGVSEIMQAVVDRIPPPADTLDEPTRALIFDSYYDSYRGVIVYFRVISGRISTKDKVLLMASKKSYELDEIGVMSPDQCEVNELHAGEVGYLAASIKAVADARVGDTITLLNAPADEPLPGYTEAKPMVFCGLFPTDADQYPDLREALDKLQLSDAALKYEPETSSAMGFGFRCGFLGLLHMEIVQERLEREYDLDLIVTAPSVIYKVNMIDGQMLMVDNPATLPDPQKRESIEEPYVRMEIYAPNEYNGTLMGLCQERRGEYIDMKYLTTERVTLIYELPLAEVVTDFFDQMKSRTKGYASMEYHLIGYRRNDLVRLDVLINAEKADPLTTIAHRDKAYSIGKGLVEKLKELIPRQQFKIPLQASIGSRIIASESISAMRKDVLAKCYGGDISRKKKLLKKQAKGKKRMKAMGKVDVPQEAFMAVLKLNQTS.

One can recognise a tr-type G domain in the interval 7-189; sequence SRLRNFCIIA…AVVDRIPPPA (183 aa). GTP is bound by residues 19-24 and 136-139; these read DHGKST and NKID.

It belongs to the TRAFAC class translation factor GTPase superfamily. Classic translation factor GTPase family. LepA subfamily.

Its subcellular location is the cell inner membrane. The enzyme catalyses GTP + H2O = GDP + phosphate + H(+). Required for accurate and efficient protein synthesis under certain stress conditions. May act as a fidelity factor of the translation reaction, by catalyzing a one-codon backward translocation of tRNAs on improperly translocated ribosomes. Back-translocation proceeds from a post-translocation (POST) complex to a pre-translocation (PRE) complex, thus giving elongation factor G a second chance to translocate the tRNAs correctly. Binds to ribosomes in a GTP-dependent manner. The polypeptide is Elongation factor 4 (Prochlorococcus marinus (strain MIT 9303)).